The chain runs to 433 residues: Glutamate-1-semialdehyde 2,1-aminomutase (433 aa).

Residue Lys-266 is modified to N6-(pyridoxal phosphate)lysine.

It belongs to the class-III pyridoxal-phosphate-dependent aminotransferase family. HemL subfamily. As to quaternary structure, homodimer. Requires pyridoxal 5'-phosphate as cofactor.

Its subcellular location is the cytoplasm. The catalysed reaction is (S)-4-amino-5-oxopentanoate = 5-aminolevulinate. It participates in porphyrin-containing compound metabolism; protoporphyrin-IX biosynthesis; 5-aminolevulinate from L-glutamyl-tRNA(Glu): step 2/2. The protein is Glutamate-1-semialdehyde 2,1-aminomutase of Psychrobacter arcticus (strain DSM 17307 / VKM B-2377 / 273-4).